Here is a 245-residue protein sequence, read N- to C-terminus: Probable metal transport system ATP-binding protein CPn_0542/CP_0210/CPj0542/CpB0563 (245 aa).

The ABC transporter domain maps to 5–240 (ILAEGLAFRY…CCHPYKNQEF (236 aa)). ATP is bound at residue 39–46 (GPNGGGKS).

The protein belongs to the ABC transporter superfamily.

The protein localises to the cell inner membrane. Part of an ATP-driven transport system CPn0541/CPn0542/CPn0543 for a metal. Probably responsible for energy coupling to the transport system. In Chlamydia pneumoniae (Chlamydophila pneumoniae), this protein is Probable metal transport system ATP-binding protein CPn_0542/CP_0210/CPj0542/CpB0563.